The primary structure comprises 312 residues: Olfactory receptor 2L13 (312 aa).

Topologically, residues 1-24 (MEKWNHTSNDFILLGLLPPNQTGI) are extracellular. N-linked (GlcNAc...) asparagine glycans are attached at residues asparagine 5 and asparagine 20. A helical transmembrane segment spans residues 25-48 (FLLCLIILIFFLASVGNSAMIHLI). At 49 to 56 (HVDPRLHT) the chain is on the cytoplasmic side. Residues 57 to 78 (PMYFLLSQLSLMDLMYISTTVP) traverse the membrane as a helical segment. Residues 79 to 99 (KMAYNFLSGQKGISFLGCGVQ) lie on the Extracellular side of the membrane. A disulfide bond links cysteine 96 and cysteine 188. Residues 100-119 (SFFFLTMACSEGLLLTSMAY) form a helical membrane-spanning segment. At 120 to 138 (DRYLAICHSLYYPIRMSKM) the chain is on the cytoplasmic side. Residues 139 to 157 (MCVKMIGGSWTLGSINSLA) traverse the membrane as a helical segment. Residues 158–194 (HTVFALHIPYCRSRAIDHFFCDVPAMLLLACTDTWVY) lie on the Extracellular side of the membrane. The chain crosses the membrane as a helical span at residues 195 to 218 (EYMVFVSTSLFLLFPFIGITSSCG). Residues 219–235 (RVLFAVYHMHSKEGRKK) lie on the Cytoplasmic side of the membrane. Residues 236–258 (AFTTISTHLTVVIFYYAPFVYTY) traverse the membrane as a helical segment. Residues 259–271 (LRPRNLRSPAEDK) lie on the Extracellular side of the membrane. Residues 272–291 (ILAVFYTILTPMLNPIIYSL) form a helical membrane-spanning segment. Topologically, residues 292-312 (RNKEVLGAMRRVFGIFSFLKE) are cytoplasmic.

This sequence belongs to the G-protein coupled receptor 1 family.

It localises to the cell membrane. Functionally, odorant receptor. The protein is Olfactory receptor 2L13 (OR2L13) of Homo sapiens (Human).